The primary structure comprises 389 residues: 23S rRNA (uracil(747)-C(5))-methyltransferase RlmC (389 aa).

[4Fe-4S] cluster-binding residues include Cys-12, Cys-20, Cys-23, and Cys-99. Residues Gln-224, Phe-253, Glu-274, and Asn-321 each contribute to the S-adenosyl-L-methionine site. Cys-348 serves as the catalytic Nucleophile.

Belongs to the class I-like SAM-binding methyltransferase superfamily. RNA M5U methyltransferase family. RlmC subfamily.

The enzyme catalyses uridine(747) in 23S rRNA + S-adenosyl-L-methionine = 5-methyluridine(747) in 23S rRNA + S-adenosyl-L-homocysteine + H(+). Its function is as follows. Catalyzes the formation of 5-methyl-uridine at position 747 (m5U747) in 23S rRNA. This is 23S rRNA (uracil(747)-C(5))-methyltransferase RlmC from Shewanella putrefaciens (strain CN-32 / ATCC BAA-453).